Reading from the N-terminus, the 552-residue chain is Undecaprenyl phosphate-alpha-4-amino-4-deoxy-L-arabinose arabinosyl transferase (552 aa).

11 consecutive transmembrane segments (helical) span residues 4 to 24 (IAGW…PLPG), 81 to 101 (FAVR…VFWL), 113 to 133 (VVAV…SYAV), 176 to 196 (FMTK…PWVI), 207 to 227 (FGPL…LAIA), 255 to 275 (APFW…LGLL), 289 to 309 (QGGD…FSIA), 313 to 333 (LPTY…GYVQ), 351 to 371 (LLVG…WGIT), 384 to 404 (VILG…SLYH), and 411 to 431 (WSAA…PQQV).

This sequence belongs to the glycosyltransferase 83 family.

It is found in the cell inner membrane. It catalyses the reaction 4-amino-4-deoxy-alpha-L-arabinopyranosyl di-trans,octa-cis-undecaprenyl phosphate + lipid IVA = lipid IIA + di-trans,octa-cis-undecaprenyl phosphate.. Its pathway is lipopolysaccharide metabolism; 4-amino-4-deoxy-beta-L-arabinose-lipid A biosynthesis. Catalyzes the transfer of the L-Ara4N moiety of the glycolipid undecaprenyl phosphate-alpha-L-Ara4N to lipid A. The modified arabinose is attached to lipid A and is required for resistance to polymyxin and cationic antimicrobial peptides. The polypeptide is Undecaprenyl phosphate-alpha-4-amino-4-deoxy-L-arabinose arabinosyl transferase (Edwardsiella ictaluri (strain 93-146)).